Reading from the N-terminus, the 317-residue chain is uncharacterized protein (317 aa).

7 helical membrane-spanning segments follow: residues 18–38 (WWII…LIII), 58–78 (IIFG…GFIF), 92–112 (FLGH…WWSV), 130–150 (LFAT…AFGV), 165–185 (QPLS…KGEL), 202–222 (LAFL…LSTV), and 253–273 (LWGG…LMVN).

This sequence belongs to the CbiQ family.

It localises to the cell membrane. This is an uncharacterized protein from Mycoplasma pneumoniae (strain ATCC 29342 / M129 / Subtype 1) (Mycoplasmoides pneumoniae).